The chain runs to 205 residues: Pyridoxine/pyridoxamine 5'-phosphate oxidase (205 aa).

FMN is bound by residues 53–58, 68–69, lysine 75, and glutamine 97; these read RMVLLK and YT. Residue lysine 58 coordinates substrate. Substrate-binding residues include tyrosine 115, arginine 119, and serine 123. FMN-binding positions include 132-133 and tryptophan 177; that span reads QS. Residue 183–185 participates in substrate binding; the sequence is RLH. Arginine 187 is a binding site for FMN.

This sequence belongs to the pyridoxamine 5'-phosphate oxidase family. In terms of assembly, homodimer. The cofactor is FMN.

It catalyses the reaction pyridoxamine 5'-phosphate + O2 + H2O = pyridoxal 5'-phosphate + H2O2 + NH4(+). The catalysed reaction is pyridoxine 5'-phosphate + O2 = pyridoxal 5'-phosphate + H2O2. It functions in the pathway cofactor metabolism; pyridoxal 5'-phosphate salvage; pyridoxal 5'-phosphate from pyridoxamine 5'-phosphate: step 1/1. It participates in cofactor metabolism; pyridoxal 5'-phosphate salvage; pyridoxal 5'-phosphate from pyridoxine 5'-phosphate: step 1/1. Functionally, catalyzes the oxidation of either pyridoxine 5'-phosphate (PNP) or pyridoxamine 5'-phosphate (PMP) into pyridoxal 5'-phosphate (PLP). This Mesorhizobium japonicum (strain LMG 29417 / CECT 9101 / MAFF 303099) (Mesorhizobium loti (strain MAFF 303099)) protein is Pyridoxine/pyridoxamine 5'-phosphate oxidase.